Here is a 185-residue protein sequence, read N- to C-terminus: Ribosome-recycling factor (185 aa).

This sequence belongs to the RRF family.

The protein localises to the cytoplasm. Its function is as follows. Responsible for the release of ribosomes from messenger RNA at the termination of protein biosynthesis. May increase the efficiency of translation by recycling ribosomes from one round of translation to another. The sequence is that of Ribosome-recycling factor from Mycobacterium bovis (strain BCG / Pasteur 1173P2).